We begin with the raw amino-acid sequence, 600 residues long: Proline dehydrogenase 1, mitochondrial (600 aa).

A disordered region spans residues 155–177 (AEHKEMESCTSAAERDGSGTNKR). N6-acetyllysine is present on residues Lys-368 and Lys-486.

The protein belongs to the proline oxidase family. FAD serves as cofactor. As to expression, expressed in lung, skeletal muscle and brain, to a lesser extent in heart and kidney, and weakly in liver, placenta and pancreas.

It is found in the mitochondrion matrix. It catalyses the reaction L-proline + a quinone = (S)-1-pyrroline-5-carboxylate + a quinol + H(+). It participates in amino-acid degradation; L-proline degradation into L-glutamate; L-glutamate from L-proline: step 1/2. Its function is as follows. Converts proline to delta-1-pyrroline-5-carboxylate. In Homo sapiens (Human), this protein is Proline dehydrogenase 1, mitochondrial.